The chain runs to 502 residues: ATP synthase subunit alpha (502 aa).

169–176 contacts ATP; the sequence is GDRQTGKT.

Belongs to the ATPase alpha/beta chains family. F-type ATPases have 2 components, CF(1) - the catalytic core - and CF(0) - the membrane proton channel. CF(1) has five subunits: alpha(3), beta(3), gamma(1), delta(1), epsilon(1). CF(0) has three main subunits: a(1), b(2) and c(9-12). The alpha and beta chains form an alternating ring which encloses part of the gamma chain. CF(1) is attached to CF(0) by a central stalk formed by the gamma and epsilon chains, while a peripheral stalk is formed by the delta and b chains.

It localises to the cell inner membrane. The catalysed reaction is ATP + H2O + 4 H(+)(in) = ADP + phosphate + 5 H(+)(out). Functionally, produces ATP from ADP in the presence of a proton gradient across the membrane. The alpha chain is a regulatory subunit. In Citrifermentans bemidjiense (strain ATCC BAA-1014 / DSM 16622 / JCM 12645 / Bem) (Geobacter bemidjiensis), this protein is ATP synthase subunit alpha.